The sequence spans 89 residues: Elongation factor 1-beta (89 aa).

Belongs to the EF-1-beta/EF-1-delta family.

Promotes the exchange of GDP for GTP in EF-1-alpha/GDP, thus allowing the regeneration of EF-1-alpha/GTP that could then be used to form the ternary complex EF-1-alpha/GTP/AAtRNA. The protein is Elongation factor 1-beta of Methanococcus vannielii (strain ATCC 35089 / DSM 1224 / JCM 13029 / OCM 148 / SB).